Consider the following 117-residue polypeptide: Cell division protein FtsB (117 aa).

The Cytoplasmic segment spans residues 1-6; sequence MRDWRW. The helical transmembrane segment at 7 to 24 threads the bilayer; sequence MLLVLALLLGWLQYRFWF. Residues 25-117 lie on the Periplasmic side of the membrane; the sequence is GPGNSGEVMM…QVGEHPADVP (93 aa). Positions 29-69 form a coiled coil; sequence SGEVMMLEAQVTNQERDNEGLQQRNDALAAEVKDLKEGQSA.

This sequence belongs to the FtsB family. In terms of assembly, part of a complex composed of FtsB, FtsL and FtsQ.

Its subcellular location is the cell inner membrane. Functionally, essential cell division protein. May link together the upstream cell division proteins, which are predominantly cytoplasmic, with the downstream cell division proteins, which are predominantly periplasmic. This is Cell division protein FtsB from Stenotrophomonas maltophilia (strain R551-3).